A 593-amino-acid chain; its full sequence is Uroporphyrinogen-III C-methyltransferase (593 aa).

Positions 278–303 are disordered; sequence ETSSSPNKKTKQETVTEGVVPPTDEN.

Belongs to the precorrin methyltransferase family.

It catalyses the reaction uroporphyrinogen III + 2 S-adenosyl-L-methionine = precorrin-2 + 2 S-adenosyl-L-homocysteine + H(+). Siroheme synthase involved in methionine biosynthesis. The protein is Uroporphyrinogen-III C-methyltransferase of Saccharomyces cerevisiae (strain ATCC 204508 / S288c) (Baker's yeast).